Here is a 430-residue protein sequence, read N- to C-terminus: Putative ABC transporter periplasmic-binding protein YcjN (430 aa).

The N-terminal stretch at 1–19 is a signal peptide; the sequence is MIKSKIVLLSALVSCALIS.

Belongs to the bacterial solute-binding protein 1 family.

Its subcellular location is the periplasm. Its function is as follows. Probably part of the binding-protein-dependent transport system YcjNOP. The polypeptide is Putative ABC transporter periplasmic-binding protein YcjN (ycjN) (Escherichia coli (strain K12)).